The following is a 1594-amino-acid chain: Calpain-D (1594 aa).

2 consecutive RanBP2-type zinc fingers follow at residues 1–35 (MGTISSVLQWSCTKCNTINPTESLKCFNCGTVRKV) and 135–164 (LNRRWVCHACGTDNSSVTWHCLICDTVSYL). 5 disordered regions span residues 210–256 (EEQH…TAID), 371–400 (EPQQKSPANPQQLQRKTQREPAAVSMNPTQ), 420–459 (ASSSSVSSSSNHHHHHHSNSNSNSSGNSNIINNNSSSSSG), 524–543 (KKKQQIASESQTNNNTGSGE), and 554–606 (AGLG…RLSG). A compositionally biased stretch (basic residues) spans 215 to 229 (HQLHSQHLHKRHLKG). 2 stretches are compositionally biased toward polar residues: residues 246–255 (RRTQSLSTAI) and 371–385 (EPQQKSPANPQQLQR). Serine 250 is subject to Phosphoserine. Residues 438 to 459 (NSNSNSSGNSNIINNNSSSSSG) are compositionally biased toward low complexity. The span at 528 to 541 (QIASESQTNNNTGS) shows a compositional bias: polar residues. The segment at 643-673 (RSKMWICIKCSYAYNRLWLQTCEMCEAKAEQ) adopts a RanBP2-type 3 zinc-finger fold. The segment at 684–703 (QQQQQQHHHHHLQQQQAEAP) is disordered. 2 RanBP2-type zinc fingers span residues 704 to 733 (RDEPWTCKKCTLVNYSTAMACVVCGGSKLK) and 744 to 774 (RKGEFWTCSHCTLKNSLHSPVCSACKSHRQP). Disordered regions lie at residues 786 to 811 (RPDGQSYEEQDAAAVGGGGGSAHQSG) and 860 to 884 (SLQQQRNSSSSGAIPKRHSTGGSIV). Positions 860–871 (SLQQQRNSSSSG) are enriched in polar residues. Residues 927-956 (STKKWQCPACTYDNCAASVVCDICSSPRGL) form a RanBP2-type 6 zinc finger. Residues 1014-1321 (LFVDDSFPPA…FDCIDICKVR (308 aa)) form the Calpain catalytic domain. Active-site residues include cysteine 1079, histidine 1245, and asparagine 1265.

The protein belongs to the peptidase C2 family.

Functionally, has a role in eye development. Calcium-regulated non-lysosomal thiol-protease. The polypeptide is Calpain-D (sol) (Drosophila melanogaster (Fruit fly)).